The primary structure comprises 85 residues: MKLLLLLTISASMLIEGLVNADGYIRGGDGCKVSCVINHVFCDNECKAAGGSYGYCWAWGLACWCEGLPADREWDYETDTCGGKK.

An N-terminal signal peptide occupies residues 1–21; the sequence is MKLLLLLTISASMLIEGLVNA. The region spanning 22 to 82 is the LCN-type CS-alpha/beta domain; that stretch reads DGYIRGGDGC…EWDYETDTCG (61 aa). 4 disulfide bridges follow: C31/C81, C35/C56, C42/C63, and C46/C65. A Glycine amide modification is found at G82.

Belongs to the long (4 C-C) scorpion toxin superfamily. Sodium channel inhibitor family. Beta subfamily. Expressed by the venom gland.

The protein resides in the secreted. Its function is as follows. Depressant insect beta-toxins cause a transient contraction paralysis followed by a slow flaccid paralysis. They bind voltage-independently at site-4 of sodium channels (Nav) and block action potentials, primarily by depolarizing the axonal membrane and suppressing the sodium current. This depressant toxin is active only on insects. It is found in a relatively small amount in the venom. The sequence is that of Beta-insect depressant toxin Lqh-dprIT3e from Leiurus hebraeus (Hebrew deathstalker scorpion).